A 266-amino-acid chain; its full sequence is Undecaprenyl-diphosphatase (266 aa).

8 consecutive transmembrane segments (helical) span residues 1–21 (MTLLQAIILGIVQGLTEFLPV), 40–60 (LPLYVDIATNTGTFFAVLVVL), 90–110 (LLVVLGSIPTAMIGLGLKPIF), 113–133 (LNQPLYVSFALIVTGLVLWFT), 145–165 (LSWLDATIGGIAQGCAVIPGI), 188–208 (FSFLMYLVVSFGVAILGIDEV), 217–237 (PLLGMIIASFVTGYIALLWLF), and 245–265 (FKWFAPYLWVVAAITLIKVAM).

This sequence belongs to the UppP family.

It localises to the cell inner membrane. It carries out the reaction di-trans,octa-cis-undecaprenyl diphosphate + H2O = di-trans,octa-cis-undecaprenyl phosphate + phosphate + H(+). Catalyzes the dephosphorylation of undecaprenyl diphosphate (UPP). Confers resistance to bacitracin. This Acaryochloris marina (strain MBIC 11017) protein is Undecaprenyl-diphosphatase.